The chain runs to 530 residues: Autoinducer-2 kinase (530 aa).

Belongs to the FGGY kinase family.

It localises to the cytoplasm. It carries out the reaction (S)-4,5-dihydroxypentane-2,3-dione + ATP = (2S)-2-hydroxy-3,4-dioxopentyl phosphate + ADP + H(+). Its function is as follows. Catalyzes the phosphorylation of autoinducer-2 (AI-2) to phospho-AI-2, which subsequently inactivates the transcriptional regulator LsrR and leads to the transcription of the lsr operon. Phosphorylates the ring-open form of (S)-4,5-dihydroxypentane-2,3-dione (DPD), which is the precursor to all AI-2 signaling molecules, at the C5 position. The protein is Autoinducer-2 kinase of Salmonella choleraesuis (strain SC-B67).